Consider the following 238-residue polypeptide: UPF0280 protein Msm_0088 (238 aa).

Belongs to the UPF0280 family.

This is UPF0280 protein Msm_0088 from Methanobrevibacter smithii (strain ATCC 35061 / DSM 861 / OCM 144 / PS).